The sequence spans 84 residues: MTDKIRTLQGRVVSDKMEKSIVVAIERIVKHPIYGKFIKRTTKLHVHDENNECGIGDVVEIHECRPLSKTKSWTLVRVVEKAVL.

Belongs to the universal ribosomal protein uS17 family. In terms of assembly, part of the 30S ribosomal subunit.

Its function is as follows. One of the primary rRNA binding proteins, it binds specifically to the 5'-end of 16S ribosomal RNA. In Enterobacter sp. (strain 638), this protein is Small ribosomal subunit protein uS17.